The sequence spans 419 residues: Farnesyl pyrophosphate synthase (419 aa).

Residue Met-1 is modified to N-acetylmethionine. Positions 123, 126, and 162 each coordinate isopentenyl diphosphate. Lys-123 is subject to N6-(2-hydroxyisobutyryl)lysine; alternate. Lys-123 carries the N6-acetyllysine; alternate modification. 2 residues coordinate Mg(2+): Asp-169 and Asp-173. A dimethylallyl diphosphate-binding site is contributed by Arg-178. Arg-179 contributes to the isopentenyl diphosphate binding site. 5 residues coordinate dimethylallyl diphosphate: Lys-266, Thr-267, Gln-306, Lys-323, and Lys-332. The residue at position 353 (Lys-353) is an N6-acetyllysine.

Belongs to the FPP/GGPP synthase family. Homodimer. Interacts with RSAD2. As to quaternary structure, (Microbial infection) Interacts with HTLV-1 protein p13(II). Mg(2+) serves as cofactor.

The protein localises to the cytoplasm. The enzyme catalyses isopentenyl diphosphate + dimethylallyl diphosphate = (2E)-geranyl diphosphate + diphosphate. It catalyses the reaction isopentenyl diphosphate + (2E)-geranyl diphosphate = (2E,6E)-farnesyl diphosphate + diphosphate. The protein operates within isoprenoid biosynthesis; farnesyl diphosphate biosynthesis; farnesyl diphosphate from geranyl diphosphate and isopentenyl diphosphate: step 1/1. It participates in isoprenoid biosynthesis; geranyl diphosphate biosynthesis; geranyl diphosphate from dimethylallyl diphosphate and isopentenyl diphosphate: step 1/1. Inactivated by interferon-induced RSAD2. This inactivation may result of disruption of lipid rafts at the plasma membrane, and thus have an antiviral effect since many enveloped viruses need lipid rafts to bud efficiently out of the cell. In terms of biological role, key enzyme in isoprenoid biosynthesis which catalyzes the formation of farnesyl diphosphate (FPP), a precursor for several classes of essential metabolites including sterols, dolichols, carotenoids, and ubiquinones. FPP also serves as substrate for protein farnesylation and geranylgeranylation. Catalyzes the sequential condensation of isopentenyl pyrophosphate with the allylic pyrophosphates, dimethylallyl pyrophosphate, and then with the resultant geranylpyrophosphate to the ultimate product farnesyl pyrophosphate. This Homo sapiens (Human) protein is Farnesyl pyrophosphate synthase.